Here is a 209-residue protein sequence, read N- to C-terminus: Pyrrolidone-carboxylate peptidase (209 aa).

Active-site residues include Glu-79, Cys-142, and His-164.

This sequence belongs to the peptidase C15 family. Homotetramer.

Its subcellular location is the cytoplasm. It carries out the reaction Release of an N-terminal pyroglutamyl group from a polypeptide, the second amino acid generally not being Pro.. Functionally, removes 5-oxoproline from various penultimate amino acid residues except L-proline. This chain is Pyrrolidone-carboxylate peptidase, found in Saccharolobus islandicus (strain Y.N.15.51 / Yellowstone #2) (Sulfolobus islandicus).